Here is a 458-residue protein sequence, read N- to C-terminus: Transmembrane protein 135 (458 aa).

6 helical membrane-spanning segments follow: residues 68-88, 96-116, 149-169, 298-318, 331-351, and 377-397; these read ILQS…FFCI, FYSW…AILI, TLRN…MFFF, FQLG…SCFL, IVAG…TISM, and ADTI…VMEV.

It belongs to the TMEM135 family.

Its subcellular location is the mitochondrion membrane. It is found in the peroxisome membrane. Involved in mitochondrial metabolism by regulating the balance between mitochondrial fusion and fission. May act as a regulator of mitochondrial fission that promotes DNM1L-dependent fission through activation of DNM1L. May be involved in peroxisome organization. The sequence is that of Transmembrane protein 135 from Mus musculus (Mouse).